The primary structure comprises 975 residues: Kinesin heavy chain (975 aa).

The 322-residue stretch at 12 to 333 folds into the Kinesin motor domain; that stretch reads SIKVVCRFRP…LDFGRRAKTV (322 aa). An ATP-binding site is contributed by 92–99; that stretch reads GQTSSGKT. Positions 180 to 321 are microtubule-binding; sequence VSSPEDVFEV…PASFNESETK (142 aa). Positions 335 to 931 form a coiled coil; sequence NVVCVNEELT…DRIKEAVRQK (597 aa). Positions 810–891 are necessary for associating with milt; the sequence is VAKELQTLHN…LPKLEKRLRC (82 aa). The segment at 932 to 975 is globular; it reads HLGRRGPQAQIAKPIRSGQGAIAIRGGGAVGGPSPLAQVNPVNS.

The protein belongs to the TRAFAC class myosin-kinesin ATPase superfamily. Kinesin family. Kinesin subfamily. In terms of assembly, oligomer composed of two heavy chains and two light chains.

The protein localises to the cytoplasm. It is found in the cytoskeleton. In terms of biological role, kinesin is a microtubule-associated force-producing protein that may play a role in organelle transport. Milt and Miro form an essential protein complex that links Khc to mitochondria for light chain-independent, anterograde transport of mitochondria. The polypeptide is Kinesin heavy chain (Khc) (Drosophila melanogaster (Fruit fly)).